Here is a 430-residue protein sequence, read N- to C-terminus: Serine hydroxymethyltransferase (430 aa).

Residues leucine 123 and 127–129 (GHL) each bind (6S)-5,6,7,8-tetrahydrofolate. Lysine 232 is subject to N6-(pyridoxal phosphate)lysine. Residue glutamate 248 participates in (6S)-5,6,7,8-tetrahydrofolate binding.

It belongs to the SHMT family. As to quaternary structure, homodimer. Pyridoxal 5'-phosphate is required as a cofactor.

Its subcellular location is the cytoplasm. It carries out the reaction (6R)-5,10-methylene-5,6,7,8-tetrahydrofolate + glycine + H2O = (6S)-5,6,7,8-tetrahydrofolate + L-serine. The protein operates within one-carbon metabolism; tetrahydrofolate interconversion. It participates in amino-acid biosynthesis; glycine biosynthesis; glycine from L-serine: step 1/1. In terms of biological role, catalyzes the reversible interconversion of serine and glycine with tetrahydrofolate (THF) serving as the one-carbon carrier. This reaction serves as the major source of one-carbon groups required for the biosynthesis of purines, thymidylate, methionine, and other important biomolecules. Also exhibits THF-independent aldolase activity toward beta-hydroxyamino acids, producing glycine and aldehydes, via a retro-aldol mechanism. This is Serine hydroxymethyltransferase from Anaplasma marginale (strain St. Maries).